Reading from the N-terminus, the 225-residue chain is Orotate phosphoribosyltransferase (225 aa).

Lys-32 provides a ligand contact to 5-phospho-alpha-D-ribose 1-diphosphate. 40–41 (FF) contacts orotate. 5-phospho-alpha-D-ribose 1-diphosphate is bound by residues 78-79 (YK), Arg-104, Lys-105, Lys-108, His-110, and 129-137 (DDVISAGTS). 2 residues coordinate orotate: Ser-133 and Arg-161.

The protein belongs to the purine/pyrimidine phosphoribosyltransferase family. PyrE subfamily. As to quaternary structure, homodimer. Mg(2+) serves as cofactor.

The enzyme catalyses orotidine 5'-phosphate + diphosphate = orotate + 5-phospho-alpha-D-ribose 1-diphosphate. It functions in the pathway pyrimidine metabolism; UMP biosynthesis via de novo pathway; UMP from orotate: step 1/2. Catalyzes the transfer of a ribosyl phosphate group from 5-phosphoribose 1-diphosphate to orotate, leading to the formation of orotidine monophosphate (OMP). The chain is Orotate phosphoribosyltransferase from Cupriavidus metallidurans (strain ATCC 43123 / DSM 2839 / NBRC 102507 / CH34) (Ralstonia metallidurans).